The following is a 329-amino-acid chain: GTP 3',8-cyclase (329 aa).

In terms of domain architecture, Radical SAM core spans 8–234 (VFARKFYYLR…QLRQRSDGPA (227 aa)). GTP is bound at residue R17. Residues C24 and C28 each contribute to the [4Fe-4S] cluster site. Y30 is a binding site for S-adenosyl-L-methionine. C31 provides a ligand contact to [4Fe-4S] cluster. Residue R68 participates in GTP binding. Residue G72 coordinates S-adenosyl-L-methionine. T99 contacts GTP. S123 contributes to the S-adenosyl-L-methionine binding site. Residue K160 coordinates GTP. M194 is a binding site for S-adenosyl-L-methionine. [4Fe-4S] cluster contacts are provided by C257 and C260. 262 to 264 (RLR) contacts GTP. C274 provides a ligand contact to [4Fe-4S] cluster.

This sequence belongs to the radical SAM superfamily. MoaA family. In terms of assembly, monomer and homodimer. The cofactor is [4Fe-4S] cluster.

It catalyses the reaction GTP + AH2 + S-adenosyl-L-methionine = (8S)-3',8-cyclo-7,8-dihydroguanosine 5'-triphosphate + 5'-deoxyadenosine + L-methionine + A + H(+). The protein operates within cofactor biosynthesis; molybdopterin biosynthesis. Its function is as follows. Catalyzes the cyclization of GTP to (8S)-3',8-cyclo-7,8-dihydroguanosine 5'-triphosphate. In Shigella flexneri, this protein is GTP 3',8-cyclase.